The following is a 160-amino-acid chain: SsrA-binding protein (160 aa).

Positions 131 to 160 (KKEYDKRHTERERDSDRELQRAVRSKGKDD) are disordered.

The protein belongs to the SmpB family.

The protein localises to the cytoplasm. In terms of biological role, required for rescue of stalled ribosomes mediated by trans-translation. Binds to transfer-messenger RNA (tmRNA), required for stable association of tmRNA with ribosomes. tmRNA and SmpB together mimic tRNA shape, replacing the anticodon stem-loop with SmpB. tmRNA is encoded by the ssrA gene; the 2 termini fold to resemble tRNA(Ala) and it encodes a 'tag peptide', a short internal open reading frame. During trans-translation Ala-aminoacylated tmRNA acts like a tRNA, entering the A-site of stalled ribosomes, displacing the stalled mRNA. The ribosome then switches to translate the ORF on the tmRNA; the nascent peptide is terminated with the 'tag peptide' encoded by the tmRNA and targeted for degradation. The ribosome is freed to recommence translation, which seems to be the essential function of trans-translation. The protein is SsrA-binding protein of Pseudomonas syringae pv. syringae (strain B728a).